The sequence spans 305 residues: tRNA dimethylallyltransferase (305 aa).

9–16 (GPTASGKS) serves as a coordination point for ATP. 11 to 16 (TASGKS) contacts substrate. The tract at residues 34–37 (DSKQ) is interaction with substrate tRNA.

This sequence belongs to the IPP transferase family. In terms of assembly, monomer. Mg(2+) is required as a cofactor.

It catalyses the reaction adenosine(37) in tRNA + dimethylallyl diphosphate = N(6)-dimethylallyladenosine(37) in tRNA + diphosphate. Catalyzes the transfer of a dimethylallyl group onto the adenine at position 37 in tRNAs that read codons beginning with uridine, leading to the formation of N6-(dimethylallyl)adenosine (i(6)A). The polypeptide is tRNA dimethylallyltransferase (Anaplasma marginale (strain St. Maries)).